Reading from the N-terminus, the 229-residue chain is Protein GrpE (229 aa).

Positions 1 to 89 (MSDFNKDDYL…AEGSSLTPLG (89 aa)) are disordered. The segment covering 24–36 (ASPDADGADAPSD) has biased composition (low complexity). The segment covering 39-50 (EQLKDDMLKDAA) has biased composition (basic and acidic residues). Over residues 65-84 (KAAAEATADAASDGDAEGSS) the composition is skewed to low complexity.

The protein belongs to the GrpE family. Homodimer.

The protein localises to the cytoplasm. In terms of biological role, participates actively in the response to hyperosmotic and heat shock by preventing the aggregation of stress-denatured proteins, in association with DnaK and GrpE. It is the nucleotide exchange factor for DnaK and may function as a thermosensor. Unfolded proteins bind initially to DnaJ; upon interaction with the DnaJ-bound protein, DnaK hydrolyzes its bound ATP, resulting in the formation of a stable complex. GrpE releases ADP from DnaK; ATP binding to DnaK triggers the release of the substrate protein, thus completing the reaction cycle. Several rounds of ATP-dependent interactions between DnaJ, DnaK and GrpE are required for fully efficient folding. In Bifidobacterium animalis subsp. lactis (strain AD011), this protein is Protein GrpE.